The sequence spans 488 residues: 1-aminocyclopropane-1-carboxylate synthase-like protein 1 (488 aa).

Lys-273 carries the post-translational modification N6-(pyridoxal phosphate)lysine.

This sequence belongs to the class-I pyridoxal-phosphate-dependent aminotransferase family. As to quaternary structure, homodimer. As to expression, expressed in young leaves and flowers. Not expressed in roots.

This chain is 1-aminocyclopropane-1-carboxylate synthase-like protein 1 (ACS1), found in Arabidopsis thaliana (Mouse-ear cress).